The sequence spans 62 residues: Photosystem II reaction center X protein (62 aa).

Residues 26 to 46 form a helical membrane-spanning segment; sequence IASFFAAALLIVIPAAAFLIF.

This sequence belongs to the PsbX family. Type 2 subfamily. As to quaternary structure, PSII consists of a core antenna complex that captures photons, and an electron transfer chain that converts photonic excitation into a charge separation. PSII forms dimeric complexes.

The protein localises to the cellular thylakoid membrane. In terms of biological role, involved in the binding and/or turnover of quinones at the Q(B) site of Photosystem II. This is Photosystem II reaction center X protein from Prochlorococcus marinus subsp. pastoris (strain CCMP1986 / NIES-2087 / MED4).